A 315-amino-acid polypeptide reads, in one-letter code: Periplasmic [NiFeSe] hydrogenase small subunit (315 aa).

Residues 1–32 (MSLSRREFVKLCSAGVAGLGISQIYHPGIVHA) constitute a signal peptide (tat-type signal). Residues Cys50, Cys53, Cys158, Cys196, His240, Cys243, Cys263, Cys269, Cys278, Cys290, Cys296, and Cys299 each coordinate [4Fe-4S] cluster.

Belongs to the [NiFe]/[NiFeSe] hydrogenase small subunit family. Heterodimer of a large and a small subunit. [4Fe-4S] cluster is required as a cofactor. In terms of processing, predicted to be exported by the Tat system. The position of the signal peptide cleavage has been experimentally proven.

Its subcellular location is the periplasm. The enzyme catalyses H2 + A = AH2. This is Periplasmic [NiFeSe] hydrogenase small subunit from Desulfomicrobium baculatum (Desulfovibrio baculatus).